We begin with the raw amino-acid sequence, 290 residues long: Hsp70 nucleotide exchange factor FES1 (290 aa).

The residue at position 12 (serine 12) is a Phosphoserine. ARM repeat units follow at residues 13–57, 76–116, 120–161, 164–205, 211–251, and 253–290; these read QGDK…NPEV, LDNA…TAVQ, DSQN…NLIR, KDIS…AYLS, ENII…HLIS, and GIKF…KYVL.

The protein belongs to the FES1 family. In terms of assembly, interacts with the Hsp70 chaperones SSA1 and SSB1.

It localises to the cytoplasm. Functionally, involved in protein translation, propagation of [PSI+] prions, and polyamine tolerance. Functions as a nucleotide exchange factor (NEF), which accelerates the release of ADP, for the cytosolic Hsp70 chaperone SSA1 and the ribosome-associated Hsp70 chaperone SSB1. Required for fully efficient Hsp70-mediated folding of proteins. The protein is Hsp70 nucleotide exchange factor FES1 (FES1) of Saccharomyces cerevisiae (strain ATCC 204508 / S288c) (Baker's yeast).